Reading from the N-terminus, the 567-residue chain is Septation ring formation regulator EzrA (567 aa).

The Extracellular portion of the chain corresponds to 1–2; sequence ME. A helical membrane pass occupies residues 3 to 21; sequence FIIGLIVILLALFSVGYFL. At 22-567 the chain is on the cytoplasmic side; the sequence is RKNIYKEIDR…AQQEKEYQHQ (546 aa). 3 coiled-coil regions span residues 108–185, 243–375, and 402–529; these read IEDL…YEEE, KGYK…RDHV, and KGHL…ERRF.

This sequence belongs to the EzrA family.

It localises to the cell membrane. Functionally, negative regulator of FtsZ ring formation; modulates the frequency and position of FtsZ ring formation. Inhibits FtsZ ring formation at polar sites. Interacts either with FtsZ or with one of its binding partners to promote depolymerization. The sequence is that of Septation ring formation regulator EzrA from Bacillus pumilus (strain SAFR-032).